The sequence spans 325 residues: UPF0324 membrane protein Bd1437 (325 aa).

The next 8 membrane-spanning stretches (helical) occupy residues 21–43 (IAALLCFFPFVSSAAALVLGIVL), 58–80 (YTHHLLSLSVIGLGAGMDLMVVG), 87–105 (IGYTVVGISFTLLLGMLIG), 115–137 (STLITVGTAICGGSAIAAVAPTI), 144–166 (VSVALGTVFMLNACALVIFPWIG), 211–230 (ARALWIVPVTFLIGLFYFRG), 243–260 (PWFILGFLIAAALVTWIP), and 302–324 (LQGVGLWIVVASCTLGAILIGWI).

It belongs to the UPF0324 family.

The protein resides in the cell membrane. In Bdellovibrio bacteriovorus (strain ATCC 15356 / DSM 50701 / NCIMB 9529 / HD100), this protein is UPF0324 membrane protein Bd1437.